A 466-amino-acid chain; its full sequence is MSVVPVADVLQGRVAVDSEVTVRGWVRTRRDSKAGISFLAVYDGSCFDPVQAVINNSLPNYNEDVLRLTTGCSVIVTGKVVASPGQGQQFEIQASKVEVAGWVEDPDTYPMAAKRHSIEYLREVAHLRPRTNLIGAVARVRHTLAQALHRFFNEQGFFWVSTPLITASDTEGAGEMFRVSTLDLENLPRNDQGKVDFDKDFFGKESFLTVSGQLNGETYACALSKIYTFGPTFRAENSNTSRHLAEFWMLEPEVAFANLNDIAGLAEAMLKYVFKAVLEERADDMKFFAERVDKDAVSRLERFIEADFAQVDYTDAVTILENCGRKFENPVYWGVDLSSEHERYLAEEHFKAPVVVKNYPKDIKAFYMRLNEDGKTVAAMDVLAPGIGEIIGGSQREERLDVLDVRMLEMGLNKEDYWWYRDLRRYGTVPHSGFGLGFERLIAYVTGVQNVRDVIPFPRTPRNASF.

It belongs to the class-II aminoacyl-tRNA synthetase family. As to quaternary structure, homodimer.

It localises to the cytoplasm. The enzyme catalyses tRNA(Asn) + L-asparagine + ATP = L-asparaginyl-tRNA(Asn) + AMP + diphosphate + H(+). This is Asparagine--tRNA ligase from Shigella dysenteriae serotype 1 (strain Sd197).